Reading from the N-terminus, the 1486-residue chain is Chromosome partition protein MukB (1486 aa).

34–41 is a binding site for ATP; sequence GGNGAGKS. Coiled coils occupy residues 326-418, 444-480, and 509-603; these read LEAD…QYNQ, LETFQAKELEATEKMLSLEQKMSMAQTAHSQFEQAYQ, and RHLA…RAPV. Residues 666–783 form a flexible hinge region; the sequence is PGGSEDQRLN…EVPLFGRAAR (118 aa). Coiled coils occupy residues 835–923, 977–1115, and 1209–1266; these read EAEI…AKLE, EMLS…TAKA, and VEAI…QNVS.

This sequence belongs to the SMC family. MukB subfamily. Homodimerization via its hinge domain. Binds to DNA via its C-terminal region. Interacts, and probably forms a ternary complex, with MukE and MukF via its C-terminal region. The complex formation is stimulated by calcium or magnesium. Interacts with tubulin-related protein FtsZ.

It localises to the cytoplasm. Its subcellular location is the nucleoid. Plays a central role in chromosome condensation, segregation and cell cycle progression. Functions as a homodimer, which is essential for chromosome partition. Involved in negative DNA supercoiling in vivo, and by this means organize and compact chromosomes. May achieve or facilitate chromosome segregation by condensation DNA from both sides of a centrally located replisome during cell division. This is Chromosome partition protein MukB from Escherichia coli (strain ATCC 8739 / DSM 1576 / NBRC 3972 / NCIMB 8545 / WDCM 00012 / Crooks).